We begin with the raw amino-acid sequence, 179 residues long: MSRIGKMPISLSNQAKIEISDANVKVTGPKGTLEQALVAQVTLQEENGVVTVQRVDETKKSKAMHGLYRMLISNMVEGVTKGFTRKLEIAGVGYRAELKNDLLALTLGYSHMIYFKAPDSIKIEVPDQTTILISGIDKALVGQVAAKIRSFRKPEPYRGKGIKYEGEVIRRKEGKAAGK.

This sequence belongs to the universal ribosomal protein uL6 family. As to quaternary structure, part of the 50S ribosomal subunit.

In terms of biological role, this protein binds to the 23S rRNA, and is important in its secondary structure. It is located near the subunit interface in the base of the L7/L12 stalk, and near the tRNA binding site of the peptidyltransferase center. This chain is Large ribosomal subunit protein uL6, found in Chlorobium limicola (strain DSM 245 / NBRC 103803 / 6330).